Reading from the N-terminus, the 352-residue chain is Ferrochelatase (352 aa).

Fe cation is bound by residues His222 and Glu303.

Belongs to the ferrochelatase family.

The protein localises to the cytoplasm. It catalyses the reaction heme b + 2 H(+) = protoporphyrin IX + Fe(2+). It participates in porphyrin-containing compound metabolism; protoheme biosynthesis; protoheme from protoporphyrin-IX: step 1/1. In terms of biological role, catalyzes the ferrous insertion into protoporphyrin IX. In Brucella abortus (strain S19), this protein is Ferrochelatase.